The primary structure comprises 189 residues: Elongation factor P (189 aa).

The protein belongs to the elongation factor P family.

It localises to the cytoplasm. It functions in the pathway protein biosynthesis; polypeptide chain elongation. Functionally, involved in peptide bond synthesis. Stimulates efficient translation and peptide-bond synthesis on native or reconstituted 70S ribosomes in vitro. Probably functions indirectly by altering the affinity of the ribosome for aminoacyl-tRNA, thus increasing their reactivity as acceptors for peptidyl transferase. The chain is Elongation factor P from Rhizobium rhizogenes (strain K84 / ATCC BAA-868) (Agrobacterium radiobacter).